A 285-amino-acid chain; its full sequence is Iodotyrosine deiodinase 1 (285 aa).

A helical membrane pass occupies residues 1–21; that stretch reads MFLLTPVLVAVVCILVVWVFK. FMN is bound by residues 96–100 and 124–125; these read RRSVR and SG. Residues alanine 126, glutamate 153, tyrosine 157, and lysine 178 each contribute to the 3,5-diiodo-L-tyrosine site. 3-iodo-L-tyrosine is bound by residues alanine 126, glutamate 153, tyrosine 157, and lysine 178. Residues 233 to 235 and arginine 275 contribute to the FMN site; that span reads TTT.

It belongs to the nitroreductase family. Homodimer. Requires FMN as cofactor.

It is found in the cell membrane. The protein localises to the cytoplasmic vesicle membrane. It carries out the reaction 2 iodide + L-tyrosine + 2 NADP(+) = 3,5-diiodo-L-tyrosine + 2 NADPH + H(+). The catalysed reaction is iodide + L-tyrosine + NADP(+) = 3-iodo-L-tyrosine + NADPH. It catalyses the reaction 3-iodo-L-tyrosine + iodide + NADP(+) = 3,5-diiodo-L-tyrosine + NADPH + H(+). The enzyme catalyses L-tyrosine + chloride + NADP(+) = 3-chloro-L-tyrosine + NADPH. It carries out the reaction bromide + L-tyrosine + NADP(+) = 3-bromo-L-tyrosine + NADPH. Its function is as follows. Catalyzes the dehalogenation of halotyrosines such as 3-bromo-L-tyrosine, 3-chloro-L-tyrosine, 3-iodo-L-tyrosine and 3,5-diiodo-L-tyrosine. During thyroid hormone biosynthesis, facilitates iodide salvage by catalysing the oxidative NADPH-dependent deiodination of the halogenated by-products of thyroid hormone production, monoiodotyrosine (L-MIT) and diiodotyrosine (L-DIT). The scavanged iodide can then reenter the hormone-producing pathways. Acts more efficiently on 3-iodo-L-tyrosine than 3,5-diiodo-L-tyrosine. The polypeptide is Iodotyrosine deiodinase 1 (Iyd) (Mus musculus (Mouse)).